Consider the following 127-residue polypeptide: Small ribosomal subunit protein uS13 (127 aa).

The disordered stretch occupies residues 93–127 (RRSLPVRGQRTHTNARTRKGPRRGTVAGKKKATKT).

The protein belongs to the universal ribosomal protein uS13 family. Part of the 30S ribosomal subunit. Forms a loose heterodimer with protein S19. Forms two bridges to the 50S subunit in the 70S ribosome.

Functionally, located at the top of the head of the 30S subunit, it contacts several helices of the 16S rRNA. In the 70S ribosome it contacts the 23S rRNA (bridge B1a) and protein L5 of the 50S subunit (bridge B1b), connecting the 2 subunits; these bridges are implicated in subunit movement. Contacts the tRNAs in the A and P-sites. This chain is Small ribosomal subunit protein uS13, found in Acidobacterium capsulatum (strain ATCC 51196 / DSM 11244 / BCRC 80197 / JCM 7670 / NBRC 15755 / NCIMB 13165 / 161).